We begin with the raw amino-acid sequence, 82 residues long: Consomatin Ar1 (82 aa).

Residues 1–22 form the signal peptide; that stretch reads MQTAYWVVVMMMMVWVTAPVSE. A propeptide spanning residues 23–60 is cleaved from the precursor; sequence GGKLSDVIWGLVPDDLTPQIILQILNASRHAYRRVRPR. Cys-64 and Cys-69 are joined by a disulfide. Residue Trp-66 is modified to D-tryptophan. A 4-hydroxyproline mark is found at Pro-70, Pro-71, and Pro-73. Positions 74 to 82 are excised as a propeptide; that stretch reads QWIHPLVKR.

Belongs to the conotoxin C superfamily. Consomatin family. Expressed by the venom duct.

The protein resides in the secreted. Its function is as follows. Moderately activates human somatostatin receptors (SSTR) with a preferential activation of SSTR1 and SSTR4. In vivo, does not cause behavioral changes in mice within a few minutes of intracranial injection, but causes a progressive loss of movement thereafter. Four to five hours after injection, mice recover, even with the highest dose tested. Shows antinociception and antihyperalgesia activities in two mouse models of acute pain, most probably by acting outside the central nervous system. This is Consomatin Ar1 from Conus arenatus (Sand-dusted cone).